A 599-amino-acid chain; its full sequence is Beta-(1--&gt;2)glucan export ATP-binding/permease protein NdvA (599 aa).

The ABC transmembrane type-1 domain maps to 21–301 (TITMCVASVL…ISAFINQTVT (281 aa)). 5 helical membrane passes run 22–42 (ITMC…PVLF), 55–75 (IFSP…AAVF), 156–176 (MRMS…GQLV), 248–268 (MAST…VTKG), and 276–296 (IAFI…SAFI). The ABC transporter domain occupies 335–569 (IVFDNVTYEF…GGRFSDLLRA (235 aa)). 368–375 (GPTGAGKT) is an ATP binding site.

This sequence belongs to the ABC transporter superfamily. Beta-(1--&gt;2)glucan exporter (TC 3.A.1.108.1) family. In terms of assembly, homodimer.

It localises to the cell inner membrane. It catalyses the reaction [(1-&gt;2)-beta-D-glucosyl](n)(in) + ATP + H2O = [(1-&gt;2)-beta-D-glucosyl](n)(out) + ADP + phosphate + H(+). In terms of biological role, involved in beta-(1--&gt;2)glucan export. Its export to the periplasmic space is required to exert its action as a virulence factor. Transmembrane domains (TMD) form a pore in the inner membrane and the ATP-binding domain (NBD) is responsible for energy generation. The polypeptide is Beta-(1--&gt;2)glucan export ATP-binding/permease protein NdvA (Brucella abortus (strain 2308)).